We begin with the raw amino-acid sequence, 36 residues long: Neuropeptide F (36 aa).

A Phenylalanine amide modification is found at Phe-36.

This sequence belongs to the NPY family. In terms of tissue distribution, central and peripheral nervous system, and muscular pharynx.

Its subcellular location is the secreted. In terms of biological role, may perform an important neurotransmitter function and may regulate muscular activity. The protein is Neuropeptide F of Arthurdendyus triangulatus (New Zealand flatworm).